A 225-amino-acid polypeptide reads, in one-letter code: 7-cyano-7-deazaguanine synthase (225 aa).

8 to 18 serves as a coordination point for ATP; that stretch reads VSGGADSATVL. Zn(2+) contacts are provided by Cys-188, Cys-198, Cys-201, and Cys-204.

The protein belongs to the QueC family. Zn(2+) serves as cofactor.

The enzyme catalyses 7-carboxy-7-deazaguanine + NH4(+) + ATP = 7-cyano-7-deazaguanine + ADP + phosphate + H2O + H(+). Its pathway is purine metabolism; 7-cyano-7-deazaguanine biosynthesis. In terms of biological role, catalyzes the ATP-dependent conversion of 7-carboxy-7-deazaguanine (CDG) to 7-cyano-7-deazaguanine (preQ(0)). In Rickettsia bellii (strain OSU 85-389), this protein is 7-cyano-7-deazaguanine synthase.